The chain runs to 407 residues: Serine hydroxymethyltransferase (407 aa).

Residues tyrosine 51 and 94–95 (GS) contribute to the pyridoxal 5'-phosphate site. (6S)-5,6,7,8-tetrahydrofolate-binding positions include leucine 117 and 121 to 123 (GHL). Residues serine 172, histidine 200, and histidine 225 each contribute to the pyridoxal 5'-phosphate site. At lysine 226 the chain carries N6-(pyridoxal phosphate)lysine. Glutamate 242 provides a ligand contact to (6S)-5,6,7,8-tetrahydrofolate. Glycine 258 is a pyridoxal 5'-phosphate binding site.

Belongs to the SHMT family. Homodimer. Pyridoxal 5'-phosphate serves as cofactor.

The protein localises to the cytoplasm. It carries out the reaction (6R)-5,10-methylene-5,6,7,8-tetrahydrofolate + glycine + H2O = (6S)-5,6,7,8-tetrahydrofolate + L-serine. Its pathway is one-carbon metabolism; tetrahydrofolate interconversion. It participates in amino-acid biosynthesis; glycine biosynthesis; glycine from L-serine: step 1/1. Its function is as follows. Catalyzes the reversible interconversion of serine and glycine with tetrahydrofolate (THF) serving as the one-carbon carrier. This reaction serves as the major source of one-carbon groups required for the biosynthesis of purines, thymidylate, methionine, and other important biomolecules. Also exhibits THF-independent aldolase activity toward beta-hydroxyamino acids, producing glycine and aldehydes, via a retro-aldol mechanism. In Thermus thermophilus (strain ATCC 27634 / DSM 579 / HB8), this protein is Serine hydroxymethyltransferase.